Consider the following 368-residue polypeptide: Quinolinate synthase (368 aa).

Iminosuccinate is bound by residues H46 and S63. C110 is a binding site for [4Fe-4S] cluster. Iminosuccinate contacts are provided by residues 141-143 and S162; that span reads YVN. Residue C230 participates in [4Fe-4S] cluster binding. Iminosuccinate-binding positions include 256-258 and T273; that span reads HPE. A [4Fe-4S] cluster-binding site is contributed by C320.

Belongs to the quinolinate synthase family. Type 3 subfamily. [4Fe-4S] cluster is required as a cofactor.

The protein localises to the cytoplasm. The enzyme catalyses iminosuccinate + dihydroxyacetone phosphate = quinolinate + phosphate + 2 H2O + H(+). It functions in the pathway cofactor biosynthesis; NAD(+) biosynthesis; quinolinate from iminoaspartate: step 1/1. Catalyzes the condensation of iminoaspartate with dihydroxyacetone phosphate to form quinolinate. The polypeptide is Quinolinate synthase (Bacillus cereus (strain Q1)).